We begin with the raw amino-acid sequence, 702 residues long: Elongation factor G (702 aa).

In terms of domain architecture, tr-type G spans 8 to 286; that stretch reads DKVRNIGIIA…AVVEYLPSPL (279 aa). Residues 17 to 24, 85 to 89, and 139 to 142 contribute to the GTP site; these read AHIDAGKT, DTPGH, and NKMD.

It belongs to the TRAFAC class translation factor GTPase superfamily. Classic translation factor GTPase family. EF-G/EF-2 subfamily.

The protein localises to the cytoplasm. Its function is as follows. Catalyzes the GTP-dependent ribosomal translocation step during translation elongation. During this step, the ribosome changes from the pre-translocational (PRE) to the post-translocational (POST) state as the newly formed A-site-bound peptidyl-tRNA and P-site-bound deacylated tRNA move to the P and E sites, respectively. Catalyzes the coordinated movement of the two tRNA molecules, the mRNA and conformational changes in the ribosome. This Chloroflexus aggregans (strain MD-66 / DSM 9485) protein is Elongation factor G.